The chain runs to 232 residues: Octanoyltransferase (232 aa).

The 188-residue stretch at 32 to 219 folds into the BPL/LPL catalytic domain; sequence DTIYDTLILL…SFMVFNFSSC (188 aa). Substrate contacts are provided by residues 77 to 84, 140 to 142, and 153 to 155; these read RGGDITYH, AIG, and GFA. Residue C171 is the Acyl-thioester intermediate of the active site.

It belongs to the LipB family.

It is found in the cytoplasm. The enzyme catalyses octanoyl-[ACP] + L-lysyl-[protein] = N(6)-octanoyl-L-lysyl-[protein] + holo-[ACP] + H(+). Its pathway is protein modification; protein lipoylation via endogenous pathway; protein N(6)-(lipoyl)lysine from octanoyl-[acyl-carrier-protein]: step 1/2. Functionally, catalyzes the transfer of endogenously produced octanoic acid from octanoyl-acyl-carrier-protein onto the lipoyl domains of lipoate-dependent enzymes. Lipoyl-ACP can also act as a substrate although octanoyl-ACP is likely to be the physiological substrate. This chain is Octanoyltransferase, found in Dictyoglomus thermophilum (strain ATCC 35947 / DSM 3960 / H-6-12).